The chain runs to 329 residues: Malate dehydrogenase (329 aa).

An NAD(+)-binding site is contributed by Gly-12–Gly-18. Substrate is bound by residues Arg-95 and Arg-101. NAD(+) is bound by residues Asn-108, Gln-115, and Val-132 to Asn-134. Substrate is bound by residues Asn-134 and Arg-165. The Proton acceptor role is filled by His-190.

It belongs to the LDH/MDH superfamily. MDH type 2 family.

The catalysed reaction is (S)-malate + NAD(+) = oxaloacetate + NADH + H(+). Its function is as follows. Catalyzes the reversible oxidation of malate to oxaloacetate. This is Malate dehydrogenase from Bordetella petrii (strain ATCC BAA-461 / DSM 12804 / CCUG 43448).